Reading from the N-terminus, the 342-residue chain is Methionine import ATP-binding protein MetN 3 (342 aa).

The ABC transporter domain occupies 2–241 (ISLKGISKTF…PKEQMTKEFV (240 aa)). 38 to 45 (GYSGAGKS) serves as a coordination point for ATP.

The protein belongs to the ABC transporter superfamily. Methionine importer (TC 3.A.1.24) family. In terms of assembly, the complex is composed of two ATP-binding proteins (MetN), two transmembrane proteins (MetI) and a solute-binding protein (MetQ).

It localises to the cell membrane. It carries out the reaction L-methionine(out) + ATP + H2O = L-methionine(in) + ADP + phosphate + H(+). The catalysed reaction is D-methionine(out) + ATP + H2O = D-methionine(in) + ADP + phosphate + H(+). Part of the ABC transporter complex MetNIQ involved in methionine import. Responsible for energy coupling to the transport system. This Shouchella clausii (strain KSM-K16) (Alkalihalobacillus clausii) protein is Methionine import ATP-binding protein MetN 3.